The chain runs to 583 residues: Putative glutaminase 3 (583 aa).

The segment at 1–29 is disordered; it reads MDNKEKEDEELSDELKDQPGPSEKPRTPT. The substrate site is built by Ser216, Asn265, Glu311, Asn318, Tyr344, Tyr396, and Val414. 3 ANK repeats span residues 482-514, 515-548, and 549-581; these read DGQN…CKDY, DDRT…PCDR, and YDRT…LKGQ.

The protein belongs to the glutaminase family.

It carries out the reaction L-glutamine + H2O = L-glutamate + NH4(+). The polypeptide is Putative glutaminase 3 (glna-3) (Caenorhabditis elegans).